Consider the following 942-residue polypeptide: UvrABC system protein A (942 aa).

32-39 lines the ATP pocket; sequence GLSGSGKS. Residues 251–278 form a C4-type zinc finger; the sequence is CPVCGFTVPELEPRLFSFNAPFGSCPTC. ABC transporter domains follow at residues 308-589 and 609-937; these read WNPI…KKSI and GNGR…HYLK. 641–648 provides a ligand contact to ATP; it reads GVSGSGKS. The C4-type zinc-finger motif lies at 740–766; the sequence is CEACSGDGIIKIEMHFLPDVYVPCEVC.

This sequence belongs to the ABC transporter superfamily. UvrA family. As to quaternary structure, forms a heterotetramer with UvrB during the search for lesions.

It localises to the cytoplasm. Functionally, the UvrABC repair system catalyzes the recognition and processing of DNA lesions. UvrA is an ATPase and a DNA-binding protein. A damage recognition complex composed of 2 UvrA and 2 UvrB subunits scans DNA for abnormalities. When the presence of a lesion has been verified by UvrB, the UvrA molecules dissociate. The chain is UvrABC system protein A from Streptococcus pyogenes serotype M1.